The primary structure comprises 90 residues: UPF0213 protein lwe0147 (90 aa).

Residues 5–83 (NEHFFYVLKC…SRKNKDSYLI (79 aa)) enclose the GIY-YIG domain.

Belongs to the UPF0213 family.

The sequence is that of UPF0213 protein lwe0147 from Listeria welshimeri serovar 6b (strain ATCC 35897 / DSM 20650 / CCUG 15529 / CIP 8149 / NCTC 11857 / SLCC 5334 / V8).